A 330-amino-acid chain; its full sequence is DNA-directed RNA polymerase subunit alpha (330 aa).

Residues 1 to 236 (MQGSVTEFLK…EQLDAFVDLR (236 aa)) form an alpha N-terminal domain (alpha-NTD) region. The tract at residues 250 to 330 (FDPILLRPVD…NWPPASIAED (81 aa)) is alpha C-terminal domain (alpha-CTD).

It belongs to the RNA polymerase alpha chain family. Homodimer. The RNAP catalytic core consists of 2 alpha, 1 beta, 1 beta' and 1 omega subunit. When a sigma factor is associated with the core the holoenzyme is formed, which can initiate transcription.

It catalyses the reaction RNA(n) + a ribonucleoside 5'-triphosphate = RNA(n+1) + diphosphate. Functionally, DNA-dependent RNA polymerase catalyzes the transcription of DNA into RNA using the four ribonucleoside triphosphates as substrates. The protein is DNA-directed RNA polymerase subunit alpha of Vibrio atlanticus (strain LGP32) (Vibrio splendidus (strain Mel32)).